A 90-amino-acid chain; its full sequence is Probable Fe(2+)-trafficking protein (90 aa).

This sequence belongs to the Fe(2+)-trafficking protein family.

Functionally, could be a mediator in iron transactions between iron acquisition and iron-requiring processes, such as synthesis and/or repair of Fe-S clusters in biosynthetic enzymes. This is Probable Fe(2+)-trafficking protein from Azotobacter vinelandii (strain DJ / ATCC BAA-1303).